Consider the following 541-residue polypeptide: Metal transporter Nramp6 (541 aa).

The span at 1–18 (MAPLPAAATATASSAATP) shows a compositional bias: low complexity. The disordered stretch occupies residues 1 to 44 (MAPLPAAATATASSAATPADDEAHSLLPSTPSNEEDDDDLEERA). Helical transmembrane passes span 87-107 (LWLFTGPGFLMSIAFLDPGNL), 120-140 (TLLWLLLWATSMGLLVQLLAA), 172-192 (VAMVGADIQEVIGSAIAIKIL), 196-216 (FLPLWAGVVITALDCFIFLSL), 224-244 (LEAVFAILIATMAVSFAWMFT), 270-290 (AVGVVGCVIMPHNVFLHSALV), 316-336 (IALAVSFMINLFVTTVFAKGF), 358-378 (FGGGFFPILYIWGIGLLAAGQ), 404-424 (IRSLITRSFAIVPTIIVALFF), 436-456 (WLNVLQSIQIPFALIPLITLV), 474-494 (VTWTVATLLITINGYLLLDFF), and 502-522 (LSGSILCVAVLAYASFVLYLI).

It belongs to the NRAMP (TC 2.A.55) family.

Its subcellular location is the membrane. Probable metal transporter. This Oryza sativa subsp. japonica (Rice) protein is Metal transporter Nramp6 (NRAMP6).